The primary structure comprises 278 residues: HTH-type transcriptional activator RhaS (278 aa).

The HTH araC/xylS-type domain maps to 174-272; the sequence is NLLLAWLEDH…NWSPRDIRQG (99 aa). DNA-binding regions (H-T-H motif) lie at residues 191 to 212 and 239 to 262; these read DAVAEQFSLSLRTLHRQLKQQT and VTDIAYRCGFSDSNHFSTLFRREF.

As to quaternary structure, binds DNA as a dimer.

It localises to the cytoplasm. Activates expression of the rhaBAD and rhaT operons. This is HTH-type transcriptional activator RhaS from Escherichia coli O139:H28 (strain E24377A / ETEC).